Here is a 469-residue protein sequence, read N- to C-terminus: 6-phosphogluconate dehydrogenase, NADP(+)-dependent, decarboxylating (469 aa).

NADP(+)-binding positions include 10-15 (GLAVMG), 33-35 (NRS), 74-76 (VKA), and Asn-102. Substrate-binding positions include Asn-102 and 128 to 130 (SGG). Lys-182 acts as the Proton acceptor in catalysis. Position 185–186 (185–186 (HN)) interacts with substrate. Residue Glu-189 is the Proton donor of the active site. Positions 190, 260, 287, 446, and 452 each coordinate substrate.

It belongs to the 6-phosphogluconate dehydrogenase family. In terms of assembly, homodimer.

It catalyses the reaction 6-phospho-D-gluconate + NADP(+) = D-ribulose 5-phosphate + CO2 + NADPH. It participates in carbohydrate degradation; pentose phosphate pathway; D-ribulose 5-phosphate from D-glucose 6-phosphate (oxidative stage): step 3/3. Functionally, catalyzes the oxidative decarboxylation of 6-phosphogluconate to ribulose 5-phosphate and CO(2), with concomitant reduction of NADP to NADPH. Is the predominant 6-P-gluconate dehydrogenase isoenzyme in B.subtilis during growth on glucose and gluconate. The sequence is that of 6-phosphogluconate dehydrogenase, NADP(+)-dependent, decarboxylating (gndA) from Bacillus subtilis (strain 168).